Here is a 426-residue protein sequence, read N- to C-terminus: MPASAADLCEFINASPSPFHVCATVAGRLLDAGYAELSEVERWPDHPGRYFIVRAGSLVAWSAGQGVKAHAPFRIVGAHTDSPNLRVKQHPDLLVAGWRVVALQPYGGAWLNSWLDRDLGVSGRLSVRSAGKGSEITDRLVRIDDPILRVPQLAIHLAEDRKSLTLDPQRHVNAVWGVGDKAGSLLEYVAERTGVAVADVLAVDLMTHDLVPSMVIGADANLLSAPRLDNQVSCYAGMEALLASVPHDCLPVLALFDHEEVGSTSDRGARSNLLSTVLERIVLAAGGGRDDYLRRLPASLLVSADMAHATHPNYPECHEPSHLIEVNAGPVLKVHPNLRYATDGRTAAAFEVACQQAGVRLQRYEHRADRPCGSTIGPLASARTGIPTVDVGAAQLAMHSARELMGAHDVAVYSAALQAFFSADLF.

Positions 79, 156, and 399 each coordinate Zn(2+).

The protein belongs to the peptidase M18 family. Requires Zn(2+) as cofactor.

This is Probable M18 family aminopeptidase 2 (apeB) from Mycobacterium leprae (strain TN).